Reading from the N-terminus, the 372-residue chain is Mitogen-activated protein kinase kinase kinase 17 (372 aa).

In terms of domain architecture, Protein kinase spans 3–259 (WTRGRILGRG…ATQLLNHPFL (257 aa)). ATP contacts are provided by residues 9–17 (LGRGSTATV) and lysine 32. Aspartate 126 functions as the Proton acceptor in the catalytic mechanism. A Phosphoserine modification is found at serine 312.

Belongs to the protein kinase superfamily. Ser/Thr protein kinase family. As to quaternary structure, binds to MKK3.

Its subcellular location is the nucleus. The enzyme catalyses L-seryl-[protein] + ATP = O-phospho-L-seryl-[protein] + ADP + H(+). The catalysed reaction is L-threonyl-[protein] + ATP = O-phospho-L-threonyl-[protein] + ADP + H(+). Its function is as follows. Component of the abscisic acid (ABA) signaling pathway that may act as ABA signal transducer in the context of abiotic stresses. Triggers MPK7 activation in a MKK3-dependent manner. Mediates the ABA-dependent activation of the MKK3-MPK7 module. The chain is Mitogen-activated protein kinase kinase kinase 17 from Arabidopsis thaliana (Mouse-ear cress).